Here is a 77-residue protein sequence, read N- to C-terminus: uncharacterized protein (77 aa).

Its subcellular location is the plastid. It is found in the cyanelle. This is an uncharacterized protein from Cyanophora paradoxa.